The primary structure comprises 120 residues: MDYEFLRDVTGRVLVRMSMGHEVVGHWFNEEVKDNLSLLDEVEQAARTVKGSERSWQRAGHEYTIWMDGEEVMIRANQLDFSGDEMEEGMSYYDEESLSLCGMEDFLRVVAAYREFVSKA.

The protein belongs to the UPF0231 family.

In Salmonella typhi, this protein is UPF0231 protein YacL.